Reading from the N-terminus, the 911-residue chain is DNA mismatch repair protein MutS (911 aa).

A disordered region spans residues 1–95 (MALQGNLFGD…PWSHHSQVTP (95 aa)). A compositionally biased stretch (basic and acidic residues) spans 23-42 (KRQDEPDQLDDHELTQDAKQ). An ATP-binding site is contributed by 727 to 734 (GPNASGKS).

This sequence belongs to the DNA mismatch repair MutS family.

In terms of biological role, this protein is involved in the repair of mismatches in DNA. It is possible that it carries out the mismatch recognition step. This protein has a weak ATPase activity. The protein is DNA mismatch repair protein MutS of Synechococcus sp. (strain CC9311).